Reading from the N-terminus, the 201-residue chain is Cytochrome c oxidase assembly protein CtaG (201 aa).

The Cytoplasmic portion of the chain corresponds to 1 to 12 (MTDQGENEKKQR). The helical; Signal-anchor for type II membrane protein transmembrane segment at 13-35 (RSNATIAVACLSFFVCMIGAAYA) threads the bilayer. Residues 36-201 (SVPLYRIFCQ…KAVGSTRNGG (166 aa)) lie on the Periplasmic side of the membrane.

The protein belongs to the COX11/CtaG family.

It is found in the cell inner membrane. Functionally, exerts its effect at some terminal stage of cytochrome c oxidase synthesis, probably by being involved in the insertion of the copper B into subunit I. The polypeptide is Cytochrome c oxidase assembly protein CtaG (Brucella suis biovar 1 (strain 1330)).